The sequence spans 437 residues: Methylenetetrahydrofolate--tRNA-(uracil-5-)-methyltransferase TrmFO (437 aa).

Residue 10 to 15 (GAGLAG) coordinates FAD.

It belongs to the MnmG family. TrmFO subfamily. The cofactor is FAD.

Its subcellular location is the cytoplasm. It carries out the reaction uridine(54) in tRNA + (6R)-5,10-methylene-5,6,7,8-tetrahydrofolate + NADH + H(+) = 5-methyluridine(54) in tRNA + (6S)-5,6,7,8-tetrahydrofolate + NAD(+). The catalysed reaction is uridine(54) in tRNA + (6R)-5,10-methylene-5,6,7,8-tetrahydrofolate + NADPH + H(+) = 5-methyluridine(54) in tRNA + (6S)-5,6,7,8-tetrahydrofolate + NADP(+). Its function is as follows. Catalyzes the folate-dependent formation of 5-methyl-uridine at position 54 (M-5-U54) in all tRNAs. In Lysinibacillus sphaericus (strain C3-41), this protein is Methylenetetrahydrofolate--tRNA-(uracil-5-)-methyltransferase TrmFO.